The sequence spans 299 residues: 11-beta-hydroxysteroid dehydrogenase-like 4A (299 aa).

Residues 10–30 (ILLPIVTVSFLLVFMPFSIFF) traverse the membrane as a helical; Signal-anchor for type II membrane protein segment. NADP(+) contacts are provided by residues 54-80 (GSSS…VARR) and D105. S184 serves as a coordination point for substrate. Y197 serves as the catalytic Proton acceptor. NADP(+) is bound by residues 197–201 (YAASK) and K201.

The protein belongs to the short-chain dehydrogenases/reductases (SDR) family.

The protein resides in the membrane. This is 11-beta-hydroxysteroid dehydrogenase-like 4A (HSD4) from Arabidopsis thaliana (Mouse-ear cress).